A 224-amino-acid polypeptide reads, in one-letter code: MKMDVKICGLKTAEAVEHAVSLGASHTGFIFFPKSPRNIEPDDAGRLAERIRGRAKIVAVTVDADNDDLDEIVSALKPDILQLHGGEDPERVLTVKAIYGLPVMKALSIREASDLDRIDPYLGIVDRFLFDAKPPAGSELPGGNGVSFDWRLLDALDGSVDYMLSGGLNAENIGEALALTGARAVDTSSGVESAPGVKDLKLMDAFFDAVRRAEAVRPRSGSKT.

The protein belongs to the TrpF family.

It carries out the reaction N-(5-phospho-beta-D-ribosyl)anthranilate = 1-(2-carboxyphenylamino)-1-deoxy-D-ribulose 5-phosphate. It participates in amino-acid biosynthesis; L-tryptophan biosynthesis; L-tryptophan from chorismate: step 3/5. This chain is N-(5'-phosphoribosyl)anthranilate isomerase, found in Sinorhizobium fredii (strain NBRC 101917 / NGR234).